Consider the following 113-residue polypeptide: Nucleoid-associated protein CLJ_B0037 (113 aa).

Residues 93-102 (EEDTSSEVKR) are compositionally biased toward basic and acidic residues. Positions 93–113 (EEDTSSEVKRLTGGMNLPGMF) are disordered.

It belongs to the YbaB/EbfC family. In terms of assembly, homodimer.

It localises to the cytoplasm. The protein localises to the nucleoid. Its function is as follows. Binds to DNA and alters its conformation. May be involved in regulation of gene expression, nucleoid organization and DNA protection. This chain is Nucleoid-associated protein CLJ_B0037, found in Clostridium botulinum (strain 657 / Type Ba4).